Consider the following 392-residue polypeptide: S-adenosylmethionine synthase (392 aa).

Histidine 20 contacts ATP. Aspartate 22 is a Mg(2+) binding site. A K(+)-binding site is contributed by glutamate 48. The L-methionine site is built by glutamate 61 and glutamine 106. The tract at residues 106–116 is flexible loop; sequence QSRDIINAIEK. ATP is bound by residues 171-173, aspartate 248, 254-255, alanine 271, and lysine 275; these read DSK and RK. Aspartate 248 is a binding site for L-methionine. Residue lysine 279 participates in L-methionine binding.

Belongs to the AdoMet synthase family. In terms of assembly, homotetramer; dimer of dimers. It depends on Mg(2+) as a cofactor. Requires K(+) as cofactor.

It localises to the cytoplasm. The enzyme catalyses L-methionine + ATP + H2O = S-adenosyl-L-methionine + phosphate + diphosphate. It participates in amino-acid biosynthesis; S-adenosyl-L-methionine biosynthesis; S-adenosyl-L-methionine from L-methionine: step 1/1. Functionally, catalyzes the formation of S-adenosylmethionine (AdoMet) from methionine and ATP. The overall synthetic reaction is composed of two sequential steps, AdoMet formation and the subsequent tripolyphosphate hydrolysis which occurs prior to release of AdoMet from the enzyme. The chain is S-adenosylmethionine synthase from Borreliella burgdorferi (strain ATCC 35210 / DSM 4680 / CIP 102532 / B31) (Borrelia burgdorferi).